The primary structure comprises 193 residues: Ion-translocating oxidoreductase complex subunit A (193 aa).

Transmembrane regions (helical) follow at residues 5 to 25 (ILLIISTALINNFVLVKFLGL), 39 to 59 (IGMGMATTFVLTVASLSAYLV), 65 to 85 (IPLEAEFLRTLVFILVIAVIV), 102 to 122 (LLGIYLPLITTNCAVLGVALL), 134 to 154 (VLYGFGAAAGFSLVLVLFSAL), and 171 to 191 (SIALITAGLMSLAFMGFTGLV).

Belongs to the NqrDE/RnfAE family. In terms of assembly, the complex is composed of six subunits: RnfA, RnfB, RnfC, RnfD, RnfE and RnfG.

Its subcellular location is the cell inner membrane. Functionally, part of a membrane-bound complex that couples electron transfer with translocation of ions across the membrane. This Glaesserella parasuis serovar 5 (strain SH0165) (Haemophilus parasuis) protein is Ion-translocating oxidoreductase complex subunit A.